Reading from the N-terminus, the 119-residue chain is Small ribosomal subunit protein uS13 (119 aa).

A disordered region spans residues 92-119; the sequence is RRGLPVRGQQTQTNARTRKGPRRGPASR.

The protein belongs to the universal ribosomal protein uS13 family. In terms of assembly, part of the 30S ribosomal subunit. Forms a loose heterodimer with protein S19. Forms two bridges to the 50S subunit in the 70S ribosome.

Its function is as follows. Located at the top of the head of the 30S subunit, it contacts several helices of the 16S rRNA. In the 70S ribosome it contacts the 23S rRNA (bridge B1a) and protein L5 of the 50S subunit (bridge B1b), connecting the 2 subunits; these bridges are implicated in subunit movement. Contacts the tRNAs in the A and P-sites. This is Small ribosomal subunit protein uS13 from Halorhodospira halophila (strain DSM 244 / SL1) (Ectothiorhodospira halophila (strain DSM 244 / SL1)).